The following is a 91-amino-acid chain: Elongation factor 1-beta (91 aa).

It belongs to the EF-1-beta/EF-1-delta family.

In terms of biological role, promotes the exchange of GDP for GTP in EF-1-alpha/GDP, thus allowing the regeneration of EF-1-alpha/GTP that could then be used to form the ternary complex EF-1-alpha/GTP/AAtRNA. This chain is Elongation factor 1-beta, found in Thermococcus kodakarensis (strain ATCC BAA-918 / JCM 12380 / KOD1) (Pyrococcus kodakaraensis (strain KOD1)).